Consider the following 346-residue polypeptide: Dihydroorotase (346 aa).

Positions 14 and 16 each coordinate Zn(2+). Substrate contacts are provided by residues 16–18 (HLR) and N42. K100, H137, and H175 together coordinate Zn(2+). K100 is modified (N6-carboxylysine). Residue H137 participates in substrate binding. L220 is a substrate binding site. D248 serves as a coordination point for Zn(2+). D248 is a catalytic residue. Residues H252 and A264 each coordinate substrate.

Belongs to the metallo-dependent hydrolases superfamily. DHOase family. Class II DHOase subfamily. As to quaternary structure, homodimer. The cofactor is Zn(2+).

The catalysed reaction is (S)-dihydroorotate + H2O = N-carbamoyl-L-aspartate + H(+). It functions in the pathway pyrimidine metabolism; UMP biosynthesis via de novo pathway; (S)-dihydroorotate from bicarbonate: step 3/3. Functionally, catalyzes the reversible cyclization of carbamoyl aspartate to dihydroorotate. This Cereibacter sphaeroides (strain ATCC 17025 / ATH 2.4.3) (Rhodobacter sphaeroides) protein is Dihydroorotase.